The chain runs to 427 residues: Glucose-6-phosphate isomerase (427 aa).

Catalysis depends on E281, which acts as the Proton donor. Residues H302 and K417 contribute to the active site.

The protein belongs to the GPI family.

It is found in the cytoplasm. It catalyses the reaction alpha-D-glucose 6-phosphate = beta-D-fructose 6-phosphate. It participates in carbohydrate biosynthesis; gluconeogenesis. It functions in the pathway carbohydrate degradation; glycolysis; D-glyceraldehyde 3-phosphate and glycerone phosphate from D-glucose: step 2/4. Its function is as follows. Catalyzes the reversible isomerization of glucose-6-phosphate to fructose-6-phosphate. In Mycoplasmopsis pulmonis (strain UAB CTIP) (Mycoplasma pulmonis), this protein is Glucose-6-phosphate isomerase.